The following is a 197-amino-acid chain: Chromophore lyase CpcT/CpeT (197 aa).

It belongs to the CpcT/CpeT biliprotein lyase family.

Its function is as follows. Covalently attaches a chromophore to Cys residue(s) of phycobiliproteins. This chain is Chromophore lyase CpcT/CpeT, found in Synechococcus sp. (strain WH8103).